The chain runs to 269 residues: Phosphate import ATP-binding protein PstB 2 (269 aa).

Residues 23–264 enclose the ABC transporter domain; that stretch reads LEVKDLSIYY…PKKQKTEDYI (242 aa). 55–62 is a binding site for ATP; sequence GPSGCGKS.

This sequence belongs to the ABC transporter superfamily. Phosphate importer (TC 3.A.1.7) family. In terms of assembly, the complex is composed of two ATP-binding proteins (PstB), two transmembrane proteins (PstC and PstA) and a solute-binding protein (PstS).

The protein resides in the cell membrane. The catalysed reaction is phosphate(out) + ATP + H2O = ADP + 2 phosphate(in) + H(+). Functionally, part of the ABC transporter complex PstSACB involved in phosphate import. Responsible for energy coupling to the transport system. The sequence is that of Phosphate import ATP-binding protein PstB 2 from Bacillus subtilis (strain 168).